The chain runs to 258 residues: MQIIRNNSQDPISISNWRWACFLDETIKAFSTFQTRPYQIDNDFLFRESFFGSSSNPKKVILETWGLKMEKIRQARCACLQAGEITSVMNLVISPLNNYDLPFFGADFVTLPNGHLIALDLQPALKDDINHTQHVWNKLKPIHAHWQSKIPSGGDIPSDARQYFSPAFLWSRIPLGEEGDNLITQTIKPAFDEYLNCFFDLLRDAKITSKERSFQLLNGQKKYMRYRAEKDPARGMLRSFFGEVWTESYINNILFDLK.

This sequence belongs to the HY2 family.

It catalyses the reaction (3Z)-phycoerythrobilin + oxidized 2[4Fe-4S]-[ferredoxin] = 15,16-dihydrobiliverdin + reduced 2[4Fe-4S]-[ferredoxin] + 2 H(+). Its function is as follows. Catalyzes the two-electron reduction of the C2 and C3(1) diene system of 15,16-dihydrobiliverdin. This chain is Phycoerythrobilin:ferredoxin oxidoreductase, found in Prochlorococcus marinus (strain NATL2A).